The chain runs to 556 residues: Formate--tetrahydrofolate ligase (556 aa).

Residue 64 to 71 (TPAGEGKT) participates in ATP binding.

Belongs to the formate--tetrahydrofolate ligase family.

The enzyme catalyses (6S)-5,6,7,8-tetrahydrofolate + formate + ATP = (6R)-10-formyltetrahydrofolate + ADP + phosphate. It functions in the pathway one-carbon metabolism; tetrahydrofolate interconversion. The chain is Formate--tetrahydrofolate ligase from Actinobacillus pleuropneumoniae serotype 5b (strain L20).